We begin with the raw amino-acid sequence, 227 residues long: DNA mismatch repair protein MutH (227 aa).

This sequence belongs to the MutH family.

Its subcellular location is the cytoplasm. In terms of biological role, sequence-specific endonuclease that cleaves unmethylated GATC sequences. It is involved in DNA mismatch repair. The chain is DNA mismatch repair protein MutH from Vibrio vulnificus (strain CMCP6).